The primary structure comprises 249 residues: Acetylglutamate kinase (249 aa).

Residues 36–37 (GG), arginine 58, and asparagine 147 contribute to the substrate site.

This sequence belongs to the acetylglutamate kinase family. ArgB subfamily.

It localises to the cytoplasm. The catalysed reaction is N-acetyl-L-glutamate + ATP = N-acetyl-L-glutamyl 5-phosphate + ADP. The protein operates within amino-acid biosynthesis; L-arginine biosynthesis; N(2)-acetyl-L-ornithine from L-glutamate: step 2/4. Its function is as follows. Catalyzes the ATP-dependent phosphorylation of N-acetyl-L-glutamate. This chain is Acetylglutamate kinase, found in Thermus thermophilus (strain ATCC 27634 / DSM 579 / HB8).